Here is a 681-residue protein sequence, read N- to C-terminus: Minichromosome maintenance domain-containing protein 2 (681 aa).

Position 292 is a phosphoserine (serine 292). The 89-residue stretch at 533–621 (RQFTTEDFEK…LIAALLFETS (89 aa)) folds into the MCM domain.

Its function is as follows. Plays an important role in meiotic recombination and associated DNA double-strand break repair. The sequence is that of Minichromosome maintenance domain-containing protein 2 (MCMDC2) from Homo sapiens (Human).